The chain runs to 476 residues: Proline--tRNA ligase 2 (476 aa).

Belongs to the class-II aminoacyl-tRNA synthetase family. ProS type 3 subfamily. Homodimer.

It localises to the cytoplasm. The catalysed reaction is tRNA(Pro) + L-proline + ATP = L-prolyl-tRNA(Pro) + AMP + diphosphate. In terms of biological role, catalyzes the attachment of proline to tRNA(Pro) in a two-step reaction: proline is first activated by ATP to form Pro-AMP and then transferred to the acceptor end of tRNA(Pro). The sequence is that of Proline--tRNA ligase 2 from Bacillus cereus (strain ATCC 14579 / DSM 31 / CCUG 7414 / JCM 2152 / NBRC 15305 / NCIMB 9373 / NCTC 2599 / NRRL B-3711).